The following is a 464-amino-acid chain: DNA primase DnaG (464 aa).

In terms of domain architecture, Toprim spans 200–274; sequence DSIIVVEGRA…DVDYVARAPE (75 aa). Mg(2+) contacts are provided by Glu-206, Asp-248, and Asp-250. A compositionally biased stretch (basic and acidic residues) spans 322–332; sequence NGREEKVREVK. A disordered region spans residues 322 to 359; that stretch reads NGREEKVREVKPPAPAPAPAPAPKPIEKPEPKEREEKI. Over residues 333 to 345 the composition is skewed to pro residues; the sequence is PPAPAPAPAPAPK. Over residues 346–359 the composition is skewed to basic and acidic residues; sequence PIEKPEPKEREEKI.

It belongs to the archaeal DnaG primase family. In terms of assembly, forms a ternary complex with MCM helicase and DNA. Component of the archaeal exosome complex. Mg(2+) is required as a cofactor.

It carries out the reaction ssDNA + n NTP = ssDNA/pppN(pN)n-1 hybrid + (n-1) diphosphate.. Functionally, RNA polymerase that catalyzes the synthesis of short RNA molecules used as primers for DNA polymerase during DNA replication. Also part of the exosome, which is a complex involved in RNA degradation. Acts as a poly(A)-binding protein that enhances the interaction between heteromeric, adenine-rich transcripts and the exosome. The sequence is that of DNA primase DnaG from Thermococcus onnurineus (strain NA1).